The sequence spans 393 residues: Formate-dependent phosphoribosylglycinamide formyltransferase (393 aa).

N(1)-(5-phospho-beta-D-ribosyl)glycinamide contacts are provided by residues 22–23 and glutamate 82; that span reads EL. Residues arginine 114, lysine 155, 160 to 165, 195 to 198, and glutamate 203 contribute to the ATP site; these read SSGKGQ and EGFV. The ATP-grasp domain maps to 119 to 308; it reads RLAAEELGLV…EFALHVRAIL (190 aa). The Mg(2+) site is built by glutamate 267 and glutamate 279. Residues aspartate 286, lysine 356, and 363–364 each bind N(1)-(5-phospho-beta-D-ribosyl)glycinamide; that span reads RR.

This sequence belongs to the PurK/PurT family. As to quaternary structure, homodimer.

The catalysed reaction is N(1)-(5-phospho-beta-D-ribosyl)glycinamide + formate + ATP = N(2)-formyl-N(1)-(5-phospho-beta-D-ribosyl)glycinamide + ADP + phosphate + H(+). The protein operates within purine metabolism; IMP biosynthesis via de novo pathway; N(2)-formyl-N(1)-(5-phospho-D-ribosyl)glycinamide from N(1)-(5-phospho-D-ribosyl)glycinamide (formate route): step 1/1. Involved in the de novo purine biosynthesis. Catalyzes the transfer of formate to 5-phospho-ribosyl-glycinamide (GAR), producing 5-phospho-ribosyl-N-formylglycinamide (FGAR). Formate is provided by PurU via hydrolysis of 10-formyl-tetrahydrofolate. The chain is Formate-dependent phosphoribosylglycinamide formyltransferase from Solidesulfovibrio magneticus (strain ATCC 700980 / DSM 13731 / RS-1) (Desulfovibrio magneticus).